A 185-amino-acid polypeptide reads, in one-letter code: Ribonuclease HII (185 aa).

The RNase H type-2 domain occupies 1 to 185 (MKICGIDEAG…LKHLQGILEF (185 aa)). The a divalent metal cation site is built by aspartate 7, glutamate 8, and aspartate 96.

It belongs to the RNase HII family. Mn(2+) serves as cofactor. Requires Mg(2+) as cofactor.

The protein resides in the cytoplasm. It carries out the reaction Endonucleolytic cleavage to 5'-phosphomonoester.. In terms of biological role, endonuclease that specifically degrades the RNA of RNA-DNA hybrids. The chain is Ribonuclease HII from Campylobacter hominis (strain ATCC BAA-381 / DSM 21671 / CCUG 45161 / LMG 19568 / NCTC 13146 / CH001A).